The primary structure comprises 267 residues: MRVAALISGGKDSCYNMMQCIAAGHQIVALANLRPAENQVGSDELDSYMYQTVGHHAIDLYAEAMALPLYRRTIRGRSLDTRQVYTKCEGDEVEDLYELLKLVKEKEEVEGISVGAILSDYQRIRVENVCKRLNLQPLAYLWQRNQEDLLREMISSNIQAMIIKVAALGLDPDKHLGKTLDQMEPYLIELSKKYGVHVCGEGGEYETFTLDCPLFKKKIIVDSSEVVIHSADAFAPVAYLRFLELHLEDKVSSVPDNYRTSNYIYNF.

Tyr-97 carries the post-translational modification Phosphotyrosine.

It belongs to the Diphthine--ammonia ligase family.

It catalyses the reaction diphthine-[translation elongation factor 2] + NH4(+) + ATP = diphthamide-[translation elongation factor 2] + AMP + diphosphate + H(+). Its pathway is protein modification; peptidyl-diphthamide biosynthesis. Functionally, amidase that may catalyze the last step of diphthamide biosynthesis using ammonium and ATP. Diphthamide biosynthesis consists in the conversion of an L-histidine residue in the translation elongation factor (EEF2) to diphthamide. This chain is Diphthine--ammonia ligase, found in Homo sapiens (Human).